The following is a 295-amino-acid chain: uncharacterized protein (295 aa).

This is an uncharacterized protein from Xanthobacter autotrophicus.